Reading from the N-terminus, the 230-residue chain is 3-beta-hydroxysteroid-Delta(8),Delta(7)-isomerase (230 aa).

Thr-2 carries the post-translational modification N-acetylthreonine. Helical transmembrane passes span Ser-29–Leu-49, Leu-66–Tyr-86, Met-121–Leu-141, and Phe-185–Leu-205. The EXPERA domain maps to Gly-61–Val-204.

Belongs to the EBP family.

The protein localises to the endoplasmic reticulum membrane. Its subcellular location is the nucleus envelope. It localises to the cytoplasmic vesicle. It catalyses the reaction lathosterol = 5alpha-cholest-8-en-3beta-ol. The enzyme catalyses zymosterol = 5alpha-cholesta-7,24-dien-3beta-ol. The catalysed reaction is 5,6alpha-epoxy-5alpha-cholestan-3beta-ol + H2O = 5alpha-cholestane-3beta,5,6beta-triol. It carries out the reaction 5,6beta-epoxy-5beta-cholestan-3beta-ol + H2O = 5alpha-cholestane-3beta,5,6beta-triol. It participates in steroid biosynthesis; cholesterol biosynthesis. Isomerase that catalyzes the conversion of Delta(8)-sterols to their corresponding Delta(7)-isomers. In terms of biological role, component of the microsomal antiestrogen binding site (AEBS), a multiproteic complex at the ER membrane that consists of an association between EBP and 7-dehydrocholesterol reductase/DHCR7. This complex is responsible for cholesterol-5,6-epoxide hydrolase (ChEH) activity, which consists in the hydration of cholesterol-5,6-epoxides (5,6-EC) into cholestane-3beta,5alpha,6beta-triol (CT). The precise role of each component of this complex has not been described yet. The protein is 3-beta-hydroxysteroid-Delta(8),Delta(7)-isomerase of Mus musculus (Mouse).